The sequence spans 207 residues: dTTP/UTP pyrophosphatase (207 aa).

Asp79 functions as the Proton acceptor in the catalytic mechanism.

The protein belongs to the Maf family. YhdE subfamily. A divalent metal cation serves as cofactor.

It is found in the cytoplasm. The enzyme catalyses dTTP + H2O = dTMP + diphosphate + H(+). It carries out the reaction UTP + H2O = UMP + diphosphate + H(+). Its function is as follows. Nucleoside triphosphate pyrophosphatase that hydrolyzes dTTP and UTP. May have a dual role in cell division arrest and in preventing the incorporation of modified nucleotides into cellular nucleic acids. The chain is dTTP/UTP pyrophosphatase from Nitrobacter winogradskyi (strain ATCC 25391 / DSM 10237 / CIP 104748 / NCIMB 11846 / Nb-255).